Consider the following 860-residue polypeptide: Leucine--tRNA ligase (860 aa).

Positions 42-52 (PYPSGRLHMGH) match the 'HIGH' region motif. Residues 619–623 (KMSKS) carry the 'KMSKS' region motif. K622 contributes to the ATP binding site.

It belongs to the class-I aminoacyl-tRNA synthetase family.

The protein resides in the cytoplasm. The catalysed reaction is tRNA(Leu) + L-leucine + ATP = L-leucyl-tRNA(Leu) + AMP + diphosphate. The polypeptide is Leucine--tRNA ligase (Salmonella typhi).